Reading from the N-terminus, the 337-residue chain is Eukaryotic translation initiation factor 3 subunit H (337 aa).

The MPN domain maps to 21–153; it reads VQCDGLAVMK…LKAYRLTPQA (133 aa).

This sequence belongs to the eIF-3 subunit H family. In terms of assembly, component of the eukaryotic translation initiation factor 3 (eIF-3) complex. The eIF-3 complex interacts with pix. Interacts with mxt.

The protein resides in the cytoplasm. In terms of biological role, component of the eukaryotic translation initiation factor 3 (eIF-3) complex, which is involved in protein synthesis of a specialized repertoire of mRNAs and, together with other initiation factors, stimulates binding of mRNA and methionyl-tRNAi to the 40S ribosome. The eIF-3 complex specifically targets and initiates translation of a subset of mRNAs involved in cell proliferation. In Drosophila grimshawi (Hawaiian fruit fly), this protein is Eukaryotic translation initiation factor 3 subunit H.